Here is a 177-residue protein sequence, read N- to C-terminus: Inner membrane-spanning protein YciB (177 aa).

5 helical membrane-spanning segments follow: residues 22-42, 50-70, 76-96, 121-141, and 149-169; these read IFIASGSLIVISGLICIIHWI, ISLFSFLSVFFFGSLTIFFHN, WKITIIYIIFSLVLLISQFFT, FIWSLFFLFCAILNIYIAYYF, and FKVFGFTSLTFFLILITSIYI.

It belongs to the YciB family.

The protein localises to the cell inner membrane. Plays a role in cell envelope biogenesis, maintenance of cell envelope integrity and membrane homeostasis. This Buchnera aphidicola subsp. Acyrthosiphon pisum (strain APS) (Acyrthosiphon pisum symbiotic bacterium) protein is Inner membrane-spanning protein YciB.